The sequence spans 128 residues: Modulator protein MzrA (128 aa).

Over M1 to V13 the chain is Cytoplasmic. Residues L14–F34 traverse the membrane as a helical segment. Residues R35–G128 lie on the Periplasmic side of the membrane.

Belongs to the MzrA family. Interacts with EnvZ.

The protein resides in the cell inner membrane. Its function is as follows. Modulates the activity of the EnvZ/OmpR two-component regulatory system, probably by directly modulating EnvZ enzymatic activity and increasing stability of phosphorylated OmpR. The chain is Modulator protein MzrA from Erwinia billingiae (strain Eb661).